A 378-amino-acid chain; its full sequence is tRNA (guanine(26)-N(2))-dimethyltransferase (378 aa).

The 371-residue stretch at 4–374 folds into the Trm1 methyltransferase domain; the sequence is KEVTEGKVRI…KEYEEITKCI (371 aa). Residues arginine 44, arginine 69, aspartate 87, aspartate 114, and alanine 115 each coordinate S-adenosyl-L-methionine. The Zn(2+) site is built by cysteine 246, cysteine 249, cysteine 263, and cysteine 266.

This sequence belongs to the class I-like SAM-binding methyltransferase superfamily. Trm1 family.

It catalyses the reaction guanosine(26) in tRNA + 2 S-adenosyl-L-methionine = N(2)-dimethylguanosine(26) in tRNA + 2 S-adenosyl-L-homocysteine + 2 H(+). Dimethylates a single guanine residue at position 26 of a number of tRNAs using S-adenosyl-L-methionine as donor of the methyl groups. The chain is tRNA (guanine(26)-N(2))-dimethyltransferase from Saccharolobus solfataricus (strain ATCC 35092 / DSM 1617 / JCM 11322 / P2) (Sulfolobus solfataricus).